The primary structure comprises 507 residues: Germ cell nuclear acidic protein (507 aa).

Low complexity predominate over residues 1–51 (MDSGSSSSSSSSGSSSGSCSTSGSGSTSGSSTTSSSSSSSSSSSSSSSSSS). The tract at residues 1–507 (MDSGSSSSSS…GRGRGAKAGK (507 aa)) is disordered. 4 consecutive short sequence motifs (SUMO interaction motif 1 (SIM)) follow at residues 12 to 15 (SGSS), 66 to 69 (CVVI), 86 to 89 (VCEI), and 108 to 111 (LIVI). 3 stretches are compositionally biased toward basic and acidic residues: residues 122–141 (KNTK…KEGV), 179–354 (SEAK…KGEM), and 431–449 (PQDR…RGDS). The span at 480-507 (GRGRGRGRGRGRGRGRGRGRGRGAKAGK) shows a compositional bias: basic residues.

Belongs to the serine-aspartate repeat-containing protein (SDr) family. As to quaternary structure, interacts (via SIM domains) with SUMO2; this interaction allows the GCNA recruitment to DPCs sites. Interacts with TOP2A; this interaction allows the resolution of topoisomerase II (TOP2A) DNA-protein cross-links. As to expression, germ-cells specific.

It is found in the chromosome. Its subcellular location is the nucleus. The protein resides in the PML body. Its function is as follows. May play a role in DNA-protein cross-links (DPCs) clearance through a SUMO-dependent recruitment to sites of DPCs, ensuring the genomic stability by protecting germ cells and early embryos from various sources of damage. Can resolve the topoisomerase II (TOP2A) DPCs. This chain is Germ cell nuclear acidic protein, found in Mus musculus (Mouse).